The sequence spans 315 residues: Neuroguidin (315 aa).

Alanine 2 carries the post-translational modification N-acetylalanine. The stretch at 5-42 (EVLESDLPNAVALLKNLQEQVMAVTAQVQTLTKKVQAK) forms a coiled coil. Positions 41–174 (AKAYPTEKGL…KGTAKKYVPP (134 aa)) are necessary for interaction with EIF4E. Phosphoserine is present on residues serine 121, serine 142, and serine 143. A disordered region spans residues 123–174 (SENDPLRFKPHPSNMMSKLSSEDEEEDEAEEGQSGASGKKSGKGTAKKYVPP). The span at 144-153 (EDEEEDEAEE) shows a compositional bias: acidic residues. The stretch at 181–205 (YDETEAEREKKRLERAKRRALSSSV) forms a coiled coil. Phosphoserine is present on residues serine 204 and serine 214. The segment at 252-315 (SKREKGRRKR…RKKKGFRRRR (64 aa)) is disordered. Residues 264 to 276 (VMSSQLHSLTHFS) show a composition bias toward polar residues. The span at 295-315 (TKKRKKIPKKGRKKKGFRRRR) shows a compositional bias: basic residues.

The protein belongs to the SAS10 family. In terms of assembly, part of the small subunit (SSU) processome, composed of more than 70 proteins and the RNA chaperone small nucleolar RNA (snoRNA) U3. Interacts with CPEB1 and EIF4E.

Its subcellular location is the nucleus. It is found in the nucleolus. The protein localises to the chromosome. The protein resides in the centromere. It localises to the cytoplasm. Its subcellular location is the cell projection. It is found in the axon. The protein localises to the dendrite. The protein resides in the filopodium. Its function is as follows. Part of the small subunit (SSU) processome, first precursor of the small eukaryotic ribosomal subunit. During the assembly of the SSU processome in the nucleolus, many ribosome biogenesis factors, an RNA chaperone and ribosomal proteins associate with the nascent pre-rRNA and work in concert to generate RNA folding, modifications, rearrangements and cleavage as well as targeted degradation of pre-ribosomal RNA by the RNA exosome. Its dissociation from the complex determines the transition from state pre-A1 to state pre-A1*. Inhibits mRNA translation in a cytoplasmic polyadenylation element (CPE)-dependent manner. This is Neuroguidin (NGDN) from Bos taurus (Bovine).